Consider the following 436-residue polypeptide: Ribosomal protein uS12 methylthiotransferase RimO (436 aa).

In terms of domain architecture, MTTase N-terminal spans 2–117; sequence RNVGIISLGC…IVDVIEEVKK (116 aa). The [4Fe-4S] cluster site is built by Cys11, Cys47, Cys80, Cys154, Cys158, and Cys161. The Radical SAM core domain occupies 140-369; the sequence is TTPPYYAYLK…MEIQKQISYE (230 aa). The region spanning 372–436 is the TRAM domain; sequence MSKIGTKLEV…AFEYDLVGEY (65 aa).

It belongs to the methylthiotransferase family. RimO subfamily. It depends on [4Fe-4S] cluster as a cofactor.

It is found in the cytoplasm. It catalyses the reaction L-aspartate(89)-[ribosomal protein uS12]-hydrogen + (sulfur carrier)-SH + AH2 + 2 S-adenosyl-L-methionine = 3-methylsulfanyl-L-aspartate(89)-[ribosomal protein uS12]-hydrogen + (sulfur carrier)-H + 5'-deoxyadenosine + L-methionine + A + S-adenosyl-L-homocysteine + 2 H(+). Its function is as follows. Catalyzes the methylthiolation of an aspartic acid residue of ribosomal protein uS12. This is Ribosomal protein uS12 methylthiotransferase RimO from Caldanaerobacter subterraneus subsp. tengcongensis (strain DSM 15242 / JCM 11007 / NBRC 100824 / MB4) (Thermoanaerobacter tengcongensis).